We begin with the raw amino-acid sequence, 180 residues long: MGLIATPQPVVGTPPAQDNYFLSINDQLADKGFLVTSTDELINWARTGSLMWMTFGLACCAVEMMQMSMPRYDCERFGFAPRGSPRQSDVMIVAGTLTNKMAPALRKVYDQMPEPRYVISMGSCANGGGYYHYSYSVVRGCDRIVPVDIYVPGCPPSAEALLYGVLLLQKKIRRTGTIER.

The [4Fe-4S] cluster site is built by Cys59, Cys60, Cys124, and Cys154.

Belongs to the complex I 20 kDa subunit family. In terms of assembly, NDH-1 is composed of 14 different subunits. Subunits NuoB, C, D, E, F, and G constitute the peripheral sector of the complex. Requires [4Fe-4S] cluster as cofactor.

The protein localises to the cell inner membrane. It catalyses the reaction a quinone + NADH + 5 H(+)(in) = a quinol + NAD(+) + 4 H(+)(out). NDH-1 shuttles electrons from NADH, via FMN and iron-sulfur (Fe-S) centers, to quinones in the respiratory chain. The immediate electron acceptor for the enzyme in this species is believed to be ubiquinone. Couples the redox reaction to proton translocation (for every two electrons transferred, four hydrogen ions are translocated across the cytoplasmic membrane), and thus conserves the redox energy in a proton gradient. The polypeptide is NADH-quinone oxidoreductase subunit B (Beijerinckia indica subsp. indica (strain ATCC 9039 / DSM 1715 / NCIMB 8712)).